The sequence spans 519 residues: Chaperone SurA (519 aa).

Positions 1–31 (MMRSLHSLRRMSGTVLALMLAAGLPLSAAQA) are cleaved as a signal peptide. Low complexity-rich tracts occupy residues 31–45 (AQPAKPAPKGDQKPA) and 197–207 (PAAAQATRAPA). Disordered stretches follow at residues 31–50 (AQPAKPAPKGDQKPATPAPS) and 196–221 (NPAAAQATRAPAPQQPQPQPRQPAQS). The PpiC 1 domain maps to 223–324 (PAMLVLAQIL…NGFHILKVVD (102 aa)). Residues 328 to 361 (GGQPAQAARPAPAPAPQQPSSFQEGPSVAAPQGP) form a disordered region. One can recognise a PpiC 2 domain in the interval 364-463 (VTQTHARHIL…FGWHLIQVLE (100 aa)).

Its subcellular location is the periplasm. The enzyme catalyses [protein]-peptidylproline (omega=180) = [protein]-peptidylproline (omega=0). In terms of biological role, chaperone involved in the correct folding and assembly of outer membrane proteins. Recognizes specific patterns of aromatic residues and the orientation of their side chains, which are found more frequently in integral outer membrane proteins. May act in both early periplasmic and late outer membrane-associated steps of protein maturation. In Bordetella pertussis (strain Tohama I / ATCC BAA-589 / NCTC 13251), this protein is Chaperone SurA.